A 276-amino-acid polypeptide reads, in one-letter code: Pantothenate synthetase (276 aa).

Residue 27 to 34 coordinates ATP; it reads MGNLHDGH. Residue H34 is the Proton donor of the active site. (R)-pantoate is bound at residue Q58. Q58 is a binding site for beta-alanine. 145–148 contributes to the ATP binding site; sequence GKKD. Q151 serves as a coordination point for (R)-pantoate. Residues I174 and 182–185 contribute to the ATP site; that span reads LSSR.

Belongs to the pantothenate synthetase family. In terms of assembly, homodimer.

The protein resides in the cytoplasm. The catalysed reaction is (R)-pantoate + beta-alanine + ATP = (R)-pantothenate + AMP + diphosphate + H(+). It functions in the pathway cofactor biosynthesis; (R)-pantothenate biosynthesis; (R)-pantothenate from (R)-pantoate and beta-alanine: step 1/1. Catalyzes the condensation of pantoate with beta-alanine in an ATP-dependent reaction via a pantoyl-adenylate intermediate. This Aromatoleum aromaticum (strain DSM 19018 / LMG 30748 / EbN1) (Azoarcus sp. (strain EbN1)) protein is Pantothenate synthetase.